A 752-amino-acid polypeptide reads, in one-letter code: Pre-mRNA-processing factor 39 (752 aa).

The segment at 1–148 (MEDSGESMTG…DPAAPQEPEL (148 aa)) is disordered. The span at 28 to 42 (TTGTDDVTGLSTSDL) shows a compositional bias: polar residues. Low complexity-rich tracts occupy residues 43–56 (TTEQPPESQEQTQP), 76–94 (QSASPAEPAAENSEQPPES), and 133–148 (EPAAEADPAAPQEPEL). 3 HAT repeats span residues 180–212 (NHLLGSRKAFDAFFLHYPYCYGYWKKYADIERK), 214–246 (GYIQMADEVYRRGLQAIPLSVDLWLHYITFLRE), and 254–289 (EAESRIRASYEHAVLACGTDFRSDRLWEAYIAWETE). A disordered region spans residues 347–374 (NKPSGDEDAETEAPGEELPPGTEDLPDP). Positions 352–361 (DEDAETEAPG) are enriched in acidic residues. 2 HAT repeats span residues 408-440 (AFEEGIKRPYFHVKALEKTQLNNWREYLDFELE) and 442-474 (GTPERVVVLFERCLIACALYEEFWIKYAKYLES). Basic and acidic residues predominate over residues 678–699 (SFKRKAENGSEEPDAKRQRTDD). The disordered stretch occupies residues 678–703 (SFKRKAENGSEEPDAKRQRTDDQSVA). One copy of the HAT 6 repeat lies at 700 to 731 (QSVASGQMMDMQANHAGYNYNNWYQYNSWGSQ).

The protein belongs to the PRP39 family.

The protein localises to the nucleus. Its function is as follows. Involved in pre-mRNA splicing. In Danio rerio (Zebrafish), this protein is Pre-mRNA-processing factor 39 (prpf39).